The sequence spans 399 residues: Formate-dependent phosphoribosylglycinamide formyltransferase (399 aa).

N(1)-(5-phospho-beta-D-ribosyl)glycinamide-binding positions include 22–23 (EL) and E82. ATP is bound by residues R114, K155, 160-165 (SSGKGQ), 195-198 (EKMI), and E203. The ATP-grasp domain occupies 119-308 (RLAAETLHLL…EFALHVRAFL (190 aa)). 2 residues coordinate Mg(2+): E267 and E279. Residues D286, K355, and 362 to 363 (RR) each bind N(1)-(5-phospho-beta-D-ribosyl)glycinamide.

This sequence belongs to the PurK/PurT family. Homodimer.

The enzyme catalyses N(1)-(5-phospho-beta-D-ribosyl)glycinamide + formate + ATP = N(2)-formyl-N(1)-(5-phospho-beta-D-ribosyl)glycinamide + ADP + phosphate + H(+). The protein operates within purine metabolism; IMP biosynthesis via de novo pathway; N(2)-formyl-N(1)-(5-phospho-D-ribosyl)glycinamide from N(1)-(5-phospho-D-ribosyl)glycinamide (formate route): step 1/1. Functionally, involved in the de novo purine biosynthesis. Catalyzes the transfer of formate to 5-phospho-ribosyl-glycinamide (GAR), producing 5-phospho-ribosyl-N-formylglycinamide (FGAR). Formate is provided by PurU via hydrolysis of 10-formyl-tetrahydrofolate. This is Formate-dependent phosphoribosylglycinamide formyltransferase from Proteus mirabilis (strain HI4320).